Consider the following 49-residue polypeptide: Disintegrin ocellatin (49 aa).

The 47-residue stretch at 1 to 47 folds into the Disintegrin domain; sequence DCESGPCCDNCKFLKEGTICKMARGDNMHHYCNGKTCDCPRNPYKGE. 4 cysteine pairs are disulfide-bonded: Cys2–Cys11, Cys7–Cys32, Cys8–Cys37, and Cys20–Cys39. A Cell attachment site motif is present at residues 24–26; it reads RGD.

The protein belongs to the venom metalloproteinase (M12B) family. P-II subfamily. P-IIa sub-subfamily. As to quaternary structure, monomer. In terms of tissue distribution, expressed by the venom gland.

The protein resides in the secreted. In terms of biological role, inhibits ADP-induced human platelet aggregation. In Echis ocellatus (Ocellated saw-scaled viper), this protein is Disintegrin ocellatin.